A 277-amino-acid chain; its full sequence is Outer kinetochore KNL1 complex subunit ZWINT (277 aa).

An interaction with NDC80 and ZW10 region spans residues 80–155 (ASEDTSRQKA…MEKRRAVQNQ (76 aa)). Residues 104-217 (REHVEAIKIG…RYQTFLQLLY (114 aa)) are a coiled coil. The segment at 228–277 (AEAEAENLPDDKPQQPTRPQEQSTGDTMGRDPGVSFKAVGLQPAGDVNLP) is disordered. The span at 241 to 253 (QQPTRPQEQSTGD) shows a compositional bias: polar residues.

Component of the KNL1 complex composed of KNL1 and ZWINT. Part of the ten-subunit outer kinetochore KMN network that includes the KNL1, MIS12 and NDC80 complexes; a bioriented kinetochore contains approximately 150 copies of the network. Interacts with the MIS12 complex subunits MIS12 DSN1, and PMF1. Interacts with the NDC80 complex subunit NDC80 during mitosis. Interacts with ZW10. Interacts with CETN3.

Its subcellular location is the nucleus. It is found in the chromosome. The protein resides in the centromere. It localises to the kinetochore. Functionally, acts as a component of the outer kinetochore KNL1 complex that serves as a docking point for spindle assembly checkpoint components and mediates microtubule-kinetochore interactions. Kinetochores, consisting of a centromere-associated inner segment and a microtubule-contacting outer segment, play a crucial role in chromosome segregation by mediating the physical connection between centromeric DNA and spindle microtubules. The outer kinetochore is made up of the ten-subunit KMN network, comprising the MIS12, NDC80 and KNL1 complexes, and auxiliary microtubule-associated components; together they connect the outer kinetochore with the inner kinetochore, bind microtubules, and mediate interactions with mitotic checkpoint proteins that delay anaphase until chromosomes are bioriented on the spindle. Targets the RZZ complex to the kinetochore at prometaphase. Recruits MAD2L1 to the kinetochore, but is not required for BUB1B localization. In addition to orienting mitotic chromosomes, it is also essential for alignment of homologous chromosomes during meiotic metaphase I. In meiosis I, required to activate the spindle assembly checkpoint at unattached kinetochores to correct erroneous kinetochore-microtubule attachments. The protein is Outer kinetochore KNL1 complex subunit ZWINT (ZWINT) of Homo sapiens (Human).